Here is a 184-residue protein sequence, read N- to C-terminus: Lipocalin-15 (184 aa).

The N-terminal stretch at 1–20 (MMSFLLGAILTLLWAPTAQA) is a signal peptide. A disulfide bridge links Cys-83 with Cys-176.

It belongs to the calycin superfamily. Lipocalin family.

The protein localises to the secreted. The polypeptide is Lipocalin-15 (LCN15) (Homo sapiens (Human)).